An 815-amino-acid chain; its full sequence is (-)-kolavenyl diphosphate synthase TPS14, chloroplastic (815 aa).

A chloroplast-targeting transit peptide spans M1 to I51. K247 contacts substrate. The Mg(2+) site is built by D379 and D381. The short motif at D379–D382 is the DXDD motif element. A substrate-binding site is contributed by K465.

It belongs to the terpene synthase family. Tpsc subfamily. Mg(2+) is required as a cofactor.

Its subcellular location is the plastid. The protein resides in the chloroplast. It carries out the reaction (2E,6E,10E)-geranylgeranyl diphosphate = (-)-kolavenyl diphosphate. Inhibited by high concentrations of magnesium. Functionally, diterpene synthase that catalyzes the formation of (-)-kolavenyl diphosphate from geranylgeranyl diphosphate (GGPP). The sequence is that of (-)-kolavenyl diphosphate synthase TPS14, chloroplastic from Tripterygium wilfordii (Thunder God vine).